The following is a 194-amino-acid chain: Oligoribonuclease (194 aa).

Residues 11–174 (LIWIDLEMTG…SDVRDSIDEL (164 aa)) enclose the Exonuclease domain. The active site involves Tyr132.

Belongs to the oligoribonuclease family.

It localises to the cytoplasm. 3'-to-5' exoribonuclease specific for small oligoribonucleotides. This is Oligoribonuclease from Xanthomonas campestris pv. campestris (strain ATCC 33913 / DSM 3586 / NCPPB 528 / LMG 568 / P 25).